Reading from the N-terminus, the 367-residue chain is Developmentally-regulated GTP-binding protein 1 (367 aa).

S2 is modified (N-acetylserine). The interval S2–A16 is required for interaction with STK16. K22 carries the post-translational modification (3S)-3-hydroxylysine. The OBG-type G domain maps to A65–K290. GTP-binding positions include G71 to S78, F96 to T100, D117 to G120, N248 to D251, and S271 to H273. Residues S78 and T98 each contribute to the Mg(2+) site. Position 100 is a phosphothreonine; by STK16 (T100). The TGS domain maps to K290–K366.

The protein belongs to the TRAFAC class OBG-HflX-like GTPase superfamily. OBG GTPase family. Interacts (via its C-terminal) with TAL1. Interacts with DFRP1/ZC3H15; this interaction prevents DRG1 poly-ubiquitination and degradation by proteasome. DRG1-ZC3H15/DFRP1 complex co-sediments with polysomes. Interacts with STK16. Interacts with JMJD7. In terms of processing, sumoylated by UBE2I in response to MEKK1-mediated stimuli. Post-translationally, hydroxylated (with S stereochemistry) at C-3 of Lys-22 by JMJD7. Phosphorylated at Thr-100 by STK16. In terms of processing, polyubiquitinated; this modification induces proteolytic degradation and is impaired by interaction with ZC3H15.

It is found in the nucleus. It localises to the cytoplasm. The enzyme catalyses GTP + H2O = GDP + phosphate + H(+). Its activity is regulated as follows. The GTPase activity is enhanced by potassium ions as well as by DFRP1 binding. Catalyzes the conversion of GTP to GDP through hydrolysis of the gamma-phosphate bond in GTP. Appears to have an intrinsic GTPase activity that is stimulated by ZC3H15/DFRP1 binding likely by increasing the affinity for the potassium ions. When hydroxylated at C-3 of 'Lys-22' by JMJD7, may bind to RNA and play a role in translation. Binds to microtubules and promotes microtubule polymerization and bundling that are required for mitotic spindle assembly during prophase to anaphase transition. GTPase activity is not necessary for these microtubule-related functions. The chain is Developmentally-regulated GTP-binding protein 1 (DRG1) from Bos taurus (Bovine).